Reading from the N-terminus, the 463-residue chain is ATP-dependent protease ATPase subunit HslU (463 aa).

ATP contacts are provided by residues Ile19 and 61–66 (GVGKTE). Residues 154 to 175 (FGGNQNSNQTSDAQEDDEIEKK) are disordered. Residues 156–165 (GNQNSNQTSD) show a composition bias toward polar residues. The ATP site is built by Asp277, Glu341, and Arg413.

It belongs to the ClpX chaperone family. HslU subfamily. In terms of assembly, a double ring-shaped homohexamer of HslV is capped on each side by a ring-shaped HslU homohexamer. The assembly of the HslU/HslV complex is dependent on binding of ATP.

The protein resides in the cytoplasm. ATPase subunit of a proteasome-like degradation complex; this subunit has chaperone activity. The binding of ATP and its subsequent hydrolysis by HslU are essential for unfolding of protein substrates subsequently hydrolyzed by HslV. HslU recognizes the N-terminal part of its protein substrates and unfolds these before they are guided to HslV for hydrolysis. In Bacillus mycoides (strain KBAB4) (Bacillus weihenstephanensis), this protein is ATP-dependent protease ATPase subunit HslU.